We begin with the raw amino-acid sequence, 315 residues long: uncharacterized protein (315 aa).

It belongs to the asfivirus C315R family.

This is an uncharacterized protein from Ornithodoros (relapsing fever ticks).